A 151-amino-acid polypeptide reads, in one-letter code: Caveolin-3 (151 aa).

At 1 to 83 (MMTEEHTDLE…RLLSTLLGVP (83 aa)) the chain is on the cytoplasmic side. K38 is covalently cross-linked (Glycyl lysine isopeptide (Lys-Gly) (interchain with G-Cter in SUMO3)). The helical intramembrane region spans 84–104 (LALLWGFLFACISFCHIWAVV). Topologically, residues 105-151 (PCIKSYLIEIQCISHIYSLCIRTFCNPLFAALGQVCSNIKVVLRREG) are cytoplasmic.

The protein belongs to the caveolin family. In terms of assembly, homooligomer. Interacts with DYSF. Interacts with DLG1 and KCNA5; forms a ternary complex. Interacts with DAG1 (via its C-terminal); the interaction prevents binding of DAG1 with DMD. Interacts with TRIM72. Interacts with MUSK; may regulate MUSK signaling. Interacts with POPDC1. Interacts with CAVIN1, CAVIN2 and CAVIN4. Post-translationally, sumoylation with SUMO3 by PIAS4 may reduce agonist-induced internalization and desensitization of adrenergic receptor ABRD2. As to expression, expressed predominantly in muscle.

The protein localises to the golgi apparatus membrane. It is found in the cell membrane. Its subcellular location is the membrane. The protein resides in the caveola. It localises to the sarcolemma. Functionally, may act as a scaffolding protein within caveolar membranes. Interacts directly with G-protein alpha subunits and can functionally regulate their activity. May also regulate voltage-gated potassium channels. Plays a role in the sarcolemma repair mechanism of both skeletal muscle and cardiomyocytes that permits rapid resealing of membranes disrupted by mechanical stress. Mediates the recruitment of CAVIN2 and CAVIN3 proteins to the caveolae. This Rattus norvegicus (Rat) protein is Caveolin-3 (Cav3).